We begin with the raw amino-acid sequence, 341 residues long: S-adenosylmethionine:tRNA ribosyltransferase-isomerase (341 aa).

The protein belongs to the QueA family. As to quaternary structure, monomer.

It is found in the cytoplasm. It catalyses the reaction 7-aminomethyl-7-carbaguanosine(34) in tRNA + S-adenosyl-L-methionine = epoxyqueuosine(34) in tRNA + adenine + L-methionine + 2 H(+). Its pathway is tRNA modification; tRNA-queuosine biosynthesis. Functionally, transfers and isomerizes the ribose moiety from AdoMet to the 7-aminomethyl group of 7-deazaguanine (preQ1-tRNA) to give epoxyqueuosine (oQ-tRNA). The chain is S-adenosylmethionine:tRNA ribosyltransferase-isomerase from Halothermothrix orenii (strain H 168 / OCM 544 / DSM 9562).